The sequence spans 189 residues: Protein CURLY FLAG LEAF 1 (189 aa).

Residues 50-55 (TLELNS) carry the EAR motif. Residues 57-91 (LSLPCHWEQCLDLKTGEIYYINWKNGMRVKEDPRK) form the WW domain. Positions 90 to 148 (RKVMNADPDSGDSYGTVCSEEDSSYYDSEESSSESSPSSRENHKEEEEEEEEEEEEEED) are disordered. Acidic residues-rich tracts occupy residues 108–121 (SEED…EESS) and 135–148 (EEEE…EEED).

In terms of assembly, interacts with BHLH122/CFLAP1 and BHLH80/CFLAP2. Binds to HDG1. As to expression, mostly observed in roots, flowers and siliques. Expressed in cells differentiated from epidermal cells such as trichomes, stigmatic papillar cells and guard cells, as well as in tissues undergoing abscission and dehiscence.

Its function is as follows. Negatively regulates the cuticle development by interacting with the HD-ZIP IV transcription factor HDG1. The protein is Protein CURLY FLAG LEAF 1 of Arabidopsis thaliana (Mouse-ear cress).